We begin with the raw amino-acid sequence, 55 residues long: Eclosion hormone (55 aa).

The protein belongs to the insect eclosion hormone family.

The protein resides in the secreted. Its function is as follows. Neuropeptide that triggers the performance of ecdysis behaviors at the end of a molt. It triggers adult behavior patterns: larval, pupal and adult ecdysis, and plasticization during the molt. The sequence is that of Eclosion hormone from Romalea microptera (Eastern lubber grasshopper).